A 673-amino-acid polypeptide reads, in one-letter code: MNRKDSKRKSHQECPVKTGGRGRPRQARRHKTCPSPREISKVMASMALGMLNEGGCSEDELLEKCIQSFDSAGSLRRGDHVLNMVLAMHSWVLPSAHFAARLLTLYQEATGSTQELRRLQICHLVRYWLTQHPETMHQDPQLEEVIGRFWATVEQEGNSVQQSLGDFSSRLSPGGPGPPHPMSSPGLGKKRKVSLLFDHLETGELAEHLTYLEFRSFQAITPQDLRDYVLQGSVRGCPTLEGSVGLSNSVSRWVQVMVLSRPGPAQRAQVLDKFIQVAQKLLQLHNFNTLMAVTGGLCHSAISRLKDSHAHLSPDSTKALLELTELLAAHNNYARYRRTWAGCMDFRLPVLGVHLKDLVALNEAQPDRLPDGRLHLPKLNSLYLRLQELAALQQQHPPGNASEDLLHLLTLSLDLFYTEDEIYELSYAREPRCPKSLPPSPFKAPLVVEWAPGVTPKPDTVTLGRHVEQLVESVFKNYDPDGRGTISQEDFERLSGNFPFACHGLHPPPCQGSGSFSREELTGYLLRASAICSKLGLAFLHTFQEVTFRKPTFCNSCSGFLWGVTKQGYRCRDCGLCCHRHCRDQVKVECKKRPGAKGDASPPEAPVPPTPVPQASCGSEDNLSYTLSLEPETGCHVRHAWTQTESPHPSWEPETVPLPAKASPPTESSKLNS.

2 stretches are compositionally biased toward basic residues: residues 1-10 and 20-32; these read MNRKDSKRKS and GRGR…RHKT. Disordered stretches follow at residues 1-34 and 162-188; these read MNRK…KTCP and QSLG…PGLG. The 124-residue stretch at 49-172 folds into the N-terminal Ras-GEF domain; the sequence is GMLNEGGCSE…SLGDFSSRLS (124 aa). The 232-residue stretch at 201 to 432 folds into the Ras-GEF domain; sequence ETGELAEHLT…YELSYAREPR (232 aa). Residues 466–501 enclose the EF-hand domain; it reads HVEQLVESVFKNYDPDGRGTISQEDFERLSGNFPFA. Residues 540–590 form a Phorbol-ester/DAG-type zinc finger; sequence LHTFQEVTFRKPTFCNSCSGFLWGVTKQGYRCRDCGLCCHRHCRDQVKVEC. Disordered regions lie at residues 593–618 and 638–673; these read RPGA…ASCG and RHAW…KLNS. Over residues 603–612 the composition is skewed to pro residues; sequence PEAPVPPTPV.

It belongs to the RASGRP family.

It is found in the cytoplasm. The protein resides in the cell membrane. Functions as a cation- and diacylglycerol (DAG)-regulated nucleotide exchange factor activating Ras through the exchange of bound GDP for GTP. In neutrophils, participates in a phospholipase C-activating N-formyl peptide-activated GPCR (G protein-coupled receptor) signaling pathway by promoting Ras-mediated activation of PIK3CG/PI3Kgamma to promote neutrophil functional responses. In CD117(+) dendritic cells and mast cells, participates in an lipopolysaccharide (LPS)-activated signaling pathway that stimulates the production of interferon-gamma and other pro-inflammatory cytokines by natural killer (NK) cells. May function in mast cell differentiation. Does not appear to be required for the development of B-cells, DC-cells, T-cells, or NK-cells. This chain is RAS guanyl-releasing protein 4 (RASGRP4), found in Bos taurus (Bovine).